A 71-amino-acid chain; its full sequence is Beta-defensin 124 (71 aa).

A signal peptide spans 1 to 22 (MTQLLLFLVALLVLGHVPSGRS). 3 cysteine pairs are disulfide-bonded: Cys-27-Cys-54, Cys-34-Cys-48, and Cys-38-Cys-55.

It belongs to the beta-defensin family.

The protein resides in the secreted. Its function is as follows. Has antibacterial activity. The sequence is that of Beta-defensin 124 (DEFB124) from Pan troglodytes (Chimpanzee).